The sequence spans 181 residues: 30 kDa heat shock protein (181 aa).

The sHSP domain occupies 33–181 (ASVQSFAPRF…PPTAKKITIQ (149 aa)). Over residues 79-115 (GRSEREYHSSSDDNKNDQADTENQARGESSEVAKTGE) the composition is skewed to basic and acidic residues. The tract at residues 79–127 (GRSEREYHSSSDDNKNDQADTENQARGESSEVAKTGEKQVSTKKAANKS) is disordered.

This sequence belongs to the small heat shock protein (HSP20) family.

This chain is 30 kDa heat shock protein (hsp30), found in Emericella nidulans (strain FGSC A4 / ATCC 38163 / CBS 112.46 / NRRL 194 / M139) (Aspergillus nidulans).